Reading from the N-terminus, the 141-residue chain is Flagellar assembly factor FliW 1 (141 aa).

Belongs to the FliW family. In terms of assembly, interacts with translational regulator CsrA and flagellin(s).

Its subcellular location is the cytoplasm. Functionally, acts as an anti-CsrA protein, binds CsrA and prevents it from repressing translation of its target genes, one of which is flagellin. Binds to flagellin and participates in the assembly of the flagellum. This Desulfotalea psychrophila (strain LSv54 / DSM 12343) protein is Flagellar assembly factor FliW 1.